Consider the following 163-residue polypeptide: ATP synthase subunit b' (163 aa).

A helical transmembrane segment spans residues 28–45 (LMAIQFLLLALILNATLY).

It belongs to the ATPase B chain family. F-type ATPases have 2 components, F(1) - the catalytic core - and F(0) - the membrane proton channel. F(1) has five subunits: alpha(3), beta(3), gamma(1), delta(1), epsilon(1). F(0) has four main subunits: a(1), b(1), b'(1) and c(10-14). The alpha and beta chains form an alternating ring which encloses part of the gamma chain. F(1) is attached to F(0) by a central stalk formed by the gamma and epsilon chains, while a peripheral stalk is formed by the delta, b and b' chains.

Its subcellular location is the cellular thylakoid membrane. Functionally, f(1)F(0) ATP synthase produces ATP from ADP in the presence of a proton or sodium gradient. F-type ATPases consist of two structural domains, F(1) containing the extramembraneous catalytic core and F(0) containing the membrane proton channel, linked together by a central stalk and a peripheral stalk. During catalysis, ATP synthesis in the catalytic domain of F(1) is coupled via a rotary mechanism of the central stalk subunits to proton translocation. In terms of biological role, component of the F(0) channel, it forms part of the peripheral stalk, linking F(1) to F(0). The b'-subunit is a diverged and duplicated form of b found in plants and photosynthetic bacteria. In Nostoc sp. (strain PCC 7120 / SAG 25.82 / UTEX 2576), this protein is ATP synthase subunit b'.